A 475-amino-acid polypeptide reads, in one-letter code: Ribulose bisphosphate carboxylase large chain (475 aa).

Positions 123 and 173 each coordinate substrate. Catalysis depends on Lys-175, which acts as the Proton acceptor. Residue Lys-177 coordinates substrate. Mg(2+) contacts are provided by Lys-201, Asp-203, and Glu-204. The residue at position 201 (Lys-201) is an N6-carboxylysine. His-294 functions as the Proton acceptor in the catalytic mechanism. The substrate site is built by Arg-295, His-327, and Ser-379.

This sequence belongs to the RuBisCO large chain family. Type I subfamily. Heterohexadecamer of 8 large chains and 8 small chains. The cofactor is Mg(2+).

Its subcellular location is the plastid. The protein resides in the cyanelle. It carries out the reaction 2 (2R)-3-phosphoglycerate + 2 H(+) = D-ribulose 1,5-bisphosphate + CO2 + H2O. It catalyses the reaction D-ribulose 1,5-bisphosphate + O2 = 2-phosphoglycolate + (2R)-3-phosphoglycerate + 2 H(+). Its function is as follows. RuBisCO catalyzes two reactions: the carboxylation of D-ribulose 1,5-bisphosphate, the primary event in carbon dioxide fixation, as well as the oxidative fragmentation of the pentose substrate in the photorespiration process. Both reactions occur simultaneously and in competition at the same active site. In Cyanophora paradoxa, this protein is Ribulose bisphosphate carboxylase large chain.